A 369-amino-acid chain; its full sequence is Putative transport protein YueF (369 aa).

8 helical membrane-spanning segments follow: residues Ile-13–Phe-33, Ile-34–Phe-54, Leu-73–Ile-93, Ala-159–Phe-179, Asp-213–Cys-233, Phe-234–Ile-254, Val-271–Ile-291, and Ile-316–Val-336.

The protein belongs to the autoinducer-2 exporter (AI-2E) (TC 2.A.86) family.

It localises to the cell membrane. In Bacillus subtilis (strain 168), this protein is Putative transport protein YueF (yueF).